The following is a 390-amino-acid chain: Dual-specificity RNA methyltransferase RlmN (390 aa).

Glutamate 111 functions as the Proton acceptor in the catalytic mechanism. The Radical SAM core domain maps to 117–356 (EDDRATLCVS…VIVRKTRGDD (240 aa)). An intrachain disulfide couples cysteine 124 to cysteine 361. Positions 131, 135, and 138 each coordinate [4Fe-4S] cluster. Residues 185–186 (GE), serine 217, 239–241 (SLH), and asparagine 318 each bind S-adenosyl-L-methionine. The S-methylcysteine intermediate role is filled by cysteine 361.

The protein belongs to the radical SAM superfamily. RlmN family. [4Fe-4S] cluster serves as cofactor.

It is found in the cytoplasm. The catalysed reaction is adenosine(2503) in 23S rRNA + 2 reduced [2Fe-2S]-[ferredoxin] + 2 S-adenosyl-L-methionine = 2-methyladenosine(2503) in 23S rRNA + 5'-deoxyadenosine + L-methionine + 2 oxidized [2Fe-2S]-[ferredoxin] + S-adenosyl-L-homocysteine. It carries out the reaction adenosine(37) in tRNA + 2 reduced [2Fe-2S]-[ferredoxin] + 2 S-adenosyl-L-methionine = 2-methyladenosine(37) in tRNA + 5'-deoxyadenosine + L-methionine + 2 oxidized [2Fe-2S]-[ferredoxin] + S-adenosyl-L-homocysteine. Specifically methylates position 2 of adenine 2503 in 23S rRNA and position 2 of adenine 37 in tRNAs. m2A2503 modification seems to play a crucial role in the proofreading step occurring at the peptidyl transferase center and thus would serve to optimize ribosomal fidelity. The sequence is that of Dual-specificity RNA methyltransferase RlmN from Edwardsiella ictaluri (strain 93-146).